The primary structure comprises 229 residues: Protein-lysine N-methyltransferase EFM4 (229 aa).

The protein belongs to the class I-like SAM-binding methyltransferase superfamily. EFM4 family.

It localises to the cytoplasm. The enzyme catalyses L-lysyl-[protein] + S-adenosyl-L-methionine = N(6)-methyl-L-lysyl-[protein] + S-adenosyl-L-homocysteine + H(+). It catalyses the reaction N(6)-methyl-L-lysyl-[protein] + S-adenosyl-L-methionine = N(6),N(6)-dimethyl-L-lysyl-[protein] + S-adenosyl-L-homocysteine + H(+). S-adenosyl-L-methionine-dependent protein-lysine N-methyltransferase that mono- and dimethylates elongation factor 1-alpha (TEF1 and TEF2) at 'Lys-316'. May play a role in intracellular transport. The polypeptide is Protein-lysine N-methyltransferase EFM4 (Saccharomyces cerevisiae (strain ATCC 204508 / S288c) (Baker's yeast)).